The following is a 303-amino-acid chain: Ribosomal protein L11 methyltransferase (303 aa).

4 residues coordinate S-adenosyl-L-methionine: T144, G165, D187, and N235.

This sequence belongs to the methyltransferase superfamily. PrmA family.

Its subcellular location is the cytoplasm. It carries out the reaction L-lysyl-[protein] + 3 S-adenosyl-L-methionine = N(6),N(6),N(6)-trimethyl-L-lysyl-[protein] + 3 S-adenosyl-L-homocysteine + 3 H(+). Functionally, methylates ribosomal protein L11. This chain is Ribosomal protein L11 methyltransferase, found in Prochlorococcus marinus (strain MIT 9312).